The primary structure comprises 305 residues: Urease accessory protein UreD (305 aa).

It belongs to the UreD family. As to quaternary structure, ureD, UreF and UreG form a complex that acts as a GTP-hydrolysis-dependent molecular chaperone, activating the urease apoprotein by helping to assemble the nickel containing metallocenter of UreC. The UreE protein probably delivers the nickel.

Its subcellular location is the cytoplasm. Functionally, required for maturation of urease via the functional incorporation of the urease nickel metallocenter. The chain is Urease accessory protein UreD from Delftia acidovorans (strain DSM 14801 / SPH-1).